An 89-amino-acid chain; its full sequence is Small ribosomal subunit protein uS15 (89 aa).

It belongs to the universal ribosomal protein uS15 family. Part of the 30S ribosomal subunit. Forms a bridge to the 50S subunit in the 70S ribosome, contacting the 23S rRNA.

Functionally, one of the primary rRNA binding proteins, it binds directly to 16S rRNA where it helps nucleate assembly of the platform of the 30S subunit by binding and bridging several RNA helices of the 16S rRNA. In terms of biological role, forms an intersubunit bridge (bridge B4) with the 23S rRNA of the 50S subunit in the ribosome. The sequence is that of Small ribosomal subunit protein uS15 from Prochlorococcus marinus (strain MIT 9312).